Reading from the N-terminus, the 220-residue chain is Ribosomal RNA large subunit methyltransferase E (220 aa).

Positions 60, 62, 92, 108, and 133 each coordinate S-adenosyl-L-methionine. Lysine 173 (proton acceptor) is an active-site residue. The interval 195–220 is disordered; it reads APRKPKASRDKSSETFILGRHLKRPR.

The protein belongs to the class I-like SAM-binding methyltransferase superfamily. RNA methyltransferase RlmE family.

Its subcellular location is the cytoplasm. The catalysed reaction is uridine(2552) in 23S rRNA + S-adenosyl-L-methionine = 2'-O-methyluridine(2552) in 23S rRNA + S-adenosyl-L-homocysteine + H(+). Functionally, specifically methylates the uridine in position 2552 of 23S rRNA at the 2'-O position of the ribose in the fully assembled 50S ribosomal subunit. The sequence is that of Ribosomal RNA large subunit methyltransferase E from Burkholderia lata (strain ATCC 17760 / DSM 23089 / LMG 22485 / NCIMB 9086 / R18194 / 383).